Consider the following 435-residue polypeptide: 5-hydroxybenzimidazole synthase (435 aa).

Substrate-binding positions include Met-95, Tyr-124, His-163, 186 to 188 (SKG), 227 to 230 (NGLR), and Glu-266. His-270 is a binding site for Zn(2+). Tyr-293 lines the substrate pocket. Residue His-334 coordinates Zn(2+). Cys-410, Cys-413, and Cys-417 together coordinate [4Fe-4S] cluster.

This sequence belongs to the ThiC family. 5-hydroxybenzimidazole synthase subfamily. Homodimer. [4Fe-4S] cluster serves as cofactor.

The catalysed reaction is 5-amino-1-(5-phospho-beta-D-ribosyl)imidazole + AH2 + S-adenosyl-L-methionine = 5-hydroxybenzimidazole + 5'-deoxyadenosine + formate + L-methionine + A + NH4(+) + phosphate + 2 H(+). Its function is as follows. Catalyzes the conversion of aminoimidazole ribotide (AIR) to 5-hydroxybenzimidazole (5-HBI) in a radical S-adenosyl-L-methionine (SAM)-dependent reaction. Is thus involved in the anaerobic biosynthesis of the benzimidazole lower axial ligand of the cobamide produced by G.metallireducens. The sequence is that of 5-hydroxybenzimidazole synthase from Geobacter metallireducens (strain ATCC 53774 / DSM 7210 / GS-15).